The chain runs to 473 residues: Fumarate hydratase class II (473 aa).

Residues 105–107 (SGT), 130–133 (HPND), 140–142 (SSN), and threonine 188 each bind substrate. Histidine 189 serves as the catalytic Proton donor/acceptor. Serine 319 is an active-site residue. Substrate-binding positions include serine 320 and 325–327 (KVN).

The protein belongs to the class-II fumarase/aspartase family. Fumarase subfamily. Homotetramer.

The protein localises to the cytoplasm. The catalysed reaction is (S)-malate = fumarate + H2O. It functions in the pathway carbohydrate metabolism; tricarboxylic acid cycle; (S)-malate from fumarate: step 1/1. Its function is as follows. Involved in the TCA cycle. Catalyzes the stereospecific interconversion of fumarate to L-malate. The polypeptide is Fumarate hydratase class II (Xylella fastidiosa (strain 9a5c)).